The following is a 123-amino-acid chain: Large ribosomal subunit protein uL14 (123 aa).

The protein belongs to the universal ribosomal protein uL14 family. In terms of assembly, part of the 50S ribosomal subunit. Forms a cluster with proteins L3 and L19. In the 70S ribosome, L14 and L19 interact and together make contacts with the 16S rRNA in bridges B5 and B8.

Binds to 23S rRNA. Forms part of two intersubunit bridges in the 70S ribosome. This chain is Large ribosomal subunit protein uL14, found in Corynebacterium urealyticum (strain ATCC 43042 / DSM 7109).